Consider the following 138-residue polypeptide: Small ribosomal subunit protein uS12 (138 aa).

The segment covering 1–22 (MPTINQLVRQGRKSISTKSDSP) has biased composition (polar residues). The interval 1–45 (MPTINQLVRQGRKSISTKSDSPALNFGYNSKKKSLTNNPAPQKRG) is disordered. Position 102 is a 3-methylthioaspartic acid (Asp102).

It belongs to the universal ribosomal protein uS12 family. In terms of assembly, part of the 30S ribosomal subunit. Contacts proteins S8 and S17. May interact with IF1 in the 30S initiation complex.

Functionally, with S4 and S5 plays an important role in translational accuracy. Interacts with and stabilizes bases of the 16S rRNA that are involved in tRNA selection in the A site and with the mRNA backbone. Located at the interface of the 30S and 50S subunits, it traverses the body of the 30S subunit contacting proteins on the other side and probably holding the rRNA structure together. The combined cluster of proteins S8, S12 and S17 appears to hold together the shoulder and platform of the 30S subunit. This Lacticaseibacillus paracasei (strain ATCC 334 / BCRC 17002 / CCUG 31169 / CIP 107868 / KCTC 3260 / NRRL B-441) (Lactobacillus paracasei) protein is Small ribosomal subunit protein uS12.